Reading from the N-terminus, the 214-residue chain is Osteoclast-stimulating factor 1 (214 aa).

Residues 12-71 (GQVKVYRALFTFDPRTPDELYFEEGDILYISDTSDSNWWKGTCRGRTGLIPSNYVAEQAE) enclose the SH3 domain. ANK repeat units lie at residues 72–101 (SIDN…GING), 105–135 (AGNT…ELNQ), and 139–168 (LGDT…RTDV).

Its subcellular location is the cytoplasm. Functionally, induces bone resorption, acting probably through a signaling cascade which results in the secretion of factor(s) enhancing osteoclast formation and activity. The polypeptide is Osteoclast-stimulating factor 1 (ostf1) (Danio rerio (Zebrafish)).